The chain runs to 110 residues: MAKHHPDLIFCRKQAGVAIGRLCEKCDGKCVICDSYVRPCTLVRICDECNYGSYQGRCVICGGPGVSDAYYCKECTIQEKDRDGCPKIVNLGSSKTDLFYERKKYGFKKR.

N-acetylalanine is present on Ala-2. Lys-3 carries the N6-acetyllysine modification. Cys-11, Cys-23, Cys-26, Cys-30, Cys-33, Cys-46, Cys-49, Cys-58, Cys-61, Cys-72, and Cys-75 together coordinate Zn(2+). The segment at Ser-35 to Tyr-51 is interaction with SF3B1 and SF3B3. The tract at residues Glu-79–Arg-82 is interaction with SF3B3. Zn(2+) is bound at residue Cys-85. Ser-94 carries the post-translational modification Phosphoserine.

The protein belongs to the PHF5 family. As to quaternary structure, component of the 17S U2 SnRNP complex, a ribonucleoprotein complex that contains small nuclear RNA (snRNA) U2 and a number of specific proteins. Part of the SF3B subcomplex of the 17S U2 SnRNP complex. SF3B associates with the splicing subcomplex SF3A and a 12S RNA unit to form the U2 small nuclear ribonucleoproteins complex (U2 snRNP). Within the SF3B complex interacts directly with SF3B1 and SF3B3. Component of the minor spliceosome, which splices U12-type introns. Within this complex, interacts with CRIPT. Interacts (via N-terminus) with U2AF1 and SRSF5; acts to bridge the two. Interacts (via C-terminus) with EP400 and DDX1; acts to bridge the two. Interacts with the PAF1 complex (PAF1C) composed of CDC73, PAF1, LEO1, CTR9, RTF1 and SKIC8. Within the PAF1C interacts directly with CDC73 and SKIC8. Interacts with RNA polymerase II. In terms of tissue distribution, expressed in primary spermatocytes (at protein level). Ubiquitously expressed in pre- and postnatal tissues. Highly expressed in pluripotent embryonic stem cells (ESCs) (at protein level) and induced pluripotent stem cells (iPSCs).

The protein localises to the nucleus. Its subcellular location is the nucleus speckle. Component of the 17S U2 SnRNP complex of the spliceosome, a large ribonucleoprotein complex that removes introns from transcribed pre-mRNAs. The 17S U2 SnRNP complex (1) directly participates in early spliceosome assembly and (2) mediates recognition of the intron branch site during pre-mRNA splicing by promoting the selection of the pre-mRNA branch-site adenosine, the nucleophile for the first step of splicing. Within the 17S U2 SnRNP complex, PHF5A is part of the SF3B subcomplex, which is required for 'A' complex assembly formed by the stable binding of U2 snRNP to the branchpoint sequence in pre-mRNA. Sequence independent binding of SF3A and SF3B subcomplexes upstream of the branch site is essential, it may anchor U2 snRNP to the pre-mRNA. Also acts as a component of the minor spliceosome, which is involved in the splicing of U12-type introns in pre-mRNAs. Also involved in elongation by RNA polymerase II as part of the PAF1 complex (PAF1C). PAF1C is required for maintenance of embryonic stem cell (ESC) self-renewal and cellular reprogramming of stem cells. Maintains pluripotency by recruiting and stabilizing PAF1C on pluripotency genes loci, and by regulating the expression of the pluripotency genes. Regulates the deposition of elongation-associated histone modifications, including dimethylated histone H3 'Lys-79' (H3K79me2) and trimethylated histone H3 'Lys-36' (H3K36me3), on PAF1C targets, self-renewal and pluripotency genes. Regulates RNA polymerase II promoter-proximal pause release of the PAF1C targets and self-renewal genes, and the levels of elongating ('Ser-2' phosphorylated) RNA polymerase II in their gene bodies. Regulates muscle specification in adult stem cells by stabilizing PAF1C in chromatin to promote myogenic differentiation. Acts as a transcriptional regulator by binding to the GJA1/Cx43 promoter and enhancing its up-regulation by ESR1/ER-alpha. The chain is PHD finger-like domain-containing protein 5A (Phf5a) from Mus musculus (Mouse).